We begin with the raw amino-acid sequence, 67 residues long: Large ribosomal subunit protein bL31 (67 aa).

Zn(2+) contacts are provided by Cys-16, Cys-18, Cys-36, and Cys-39.

This sequence belongs to the bacterial ribosomal protein bL31 family. Type A subfamily. As to quaternary structure, part of the 50S ribosomal subunit. Zn(2+) is required as a cofactor.

Binds the 23S rRNA. In Treponema denticola (strain ATCC 35405 / DSM 14222 / CIP 103919 / JCM 8153 / KCTC 15104), this protein is Large ribosomal subunit protein bL31.